The following is a 169-amino-acid chain: Peptide deformylase (169 aa).

Residues Cys-91 and His-133 each contribute to the Fe cation site. The active site involves Glu-134. His-137 serves as a coordination point for Fe cation.

It belongs to the polypeptide deformylase family. It depends on Fe(2+) as a cofactor.

The enzyme catalyses N-terminal N-formyl-L-methionyl-[peptide] + H2O = N-terminal L-methionyl-[peptide] + formate. In terms of biological role, removes the formyl group from the N-terminal Met of newly synthesized proteins. Requires at least a dipeptide for an efficient rate of reaction. N-terminal L-methionine is a prerequisite for activity but the enzyme has broad specificity at other positions. The polypeptide is Peptide deformylase (Escherichia coli (strain K12 / DH10B)).